The primary structure comprises 239 residues: tRNA (guanine-N(1)-)-methyltransferase (239 aa).

S-adenosyl-L-methionine contacts are provided by residues G109 and 128–133 (IGDYVL).

Belongs to the RNA methyltransferase TrmD family. As to quaternary structure, homodimer.

It localises to the cytoplasm. The enzyme catalyses guanosine(37) in tRNA + S-adenosyl-L-methionine = N(1)-methylguanosine(37) in tRNA + S-adenosyl-L-homocysteine + H(+). In terms of biological role, specifically methylates guanosine-37 in various tRNAs. The sequence is that of tRNA (guanine-N(1)-)-methyltransferase from Thermus thermophilus (strain ATCC BAA-163 / DSM 7039 / HB27).